The sequence spans 319 residues: Large ribosomal subunit protein uL10 (319 aa).

Positions 286 to 319 (AGDSGASAAPKEEEKAAEPEEESDEEMGFSLFDD) are disordered. Over residues 304-319 (PEEESDEEMGFSLFDD) the composition is skewed to acidic residues.

The protein belongs to the universal ribosomal protein uL10 family. P0 forms a pentameric complex by interaction with dimers of P1 and P2. Post-translationally, phosphorylated.

Its function is as follows. Ribosomal protein P0 is the functional equivalent of E.coli protein L10. The chain is Large ribosomal subunit protein uL10 (RP-P0) from Zea mays (Maize).